Reading from the N-terminus, the 286-residue chain is UDP-3-O-acyl-N-acetylglucosamine deacetylase (286 aa).

Zn(2+)-binding residues include His79, His237, and Asp241. Catalysis depends on His264, which acts as the Proton donor.

This sequence belongs to the LpxC family. The cofactor is Zn(2+).

The catalysed reaction is a UDP-3-O-[(3R)-3-hydroxyacyl]-N-acetyl-alpha-D-glucosamine + H2O = a UDP-3-O-[(3R)-3-hydroxyacyl]-alpha-D-glucosamine + acetate. Its pathway is glycolipid biosynthesis; lipid IV(A) biosynthesis; lipid IV(A) from (3R)-3-hydroxytetradecanoyl-[acyl-carrier-protein] and UDP-N-acetyl-alpha-D-glucosamine: step 2/6. In terms of biological role, catalyzes the hydrolysis of UDP-3-O-myristoyl-N-acetylglucosamine to form UDP-3-O-myristoylglucosamine and acetate, the committed step in lipid A biosynthesis. The chain is UDP-3-O-acyl-N-acetylglucosamine deacetylase from Brucella abortus (strain 2308).